The chain runs to 387 residues: MFAFFRSSSNEPDGTLYNKLIEAIKSRNSLEVLALIPKMKNEELAKPNIYGNTPLSLALNKKLEAVCEVLVSRMSDKDISIIETYVEHRETYFTLAAIKGFKGVCENLAPRMSNEAINVINARKHTALTLAADKNLPQVCIKLIPIMFDEVINVTENRHKDSALRKAIWNDLDVVCQMLIPVTSKENINYIDVSDRTLLILAAQKGMKVVCKMLISRMIEDNSLDIINHVISKGELKGESALSLAEKQKGFEDICELLQKSHEEYKEQKQKENEKKCEESQPKKIISEDINKLLNELKDGAYNNKNIIEFSISAKIEKLEKNANDLSEIYTNIQDIINHNKNTKAKLLALEKHLNQIIDAQTINTEQQISLEALGDVSVEFSNSRGV.

ANK repeat units follow at residues 50 to 79 (YGNT…DKDI), 88 to 119 (HRET…AINV), 123 to 154 (RKHT…VINV), 159 to 188 (HKDS…KENI), and 210 to 239 (VCKM…LKGE). Coiled coils occupy residues 251–278 (FEDI…KKCE) and 311–352 (SISA…ALEK).

The sequence is that of Putative ankyrin repeat protein RBE_0984 from Rickettsia bellii (strain RML369-C).